Here is a 390-residue protein sequence, read N- to C-terminus: Lipid-A-disaccharide synthase (390 aa).

The protein belongs to the LpxB family.

The enzyme catalyses a lipid X + a UDP-2-N,3-O-bis[(3R)-3-hydroxyacyl]-alpha-D-glucosamine = a lipid A disaccharide + UDP + H(+). Its pathway is bacterial outer membrane biogenesis; LPS lipid A biosynthesis. Condensation of UDP-2,3-diacylglucosamine and 2,3-diacylglucosamine-1-phosphate to form lipid A disaccharide, a precursor of lipid A, a phosphorylated glycolipid that anchors the lipopolysaccharide to the outer membrane of the cell. This chain is Lipid-A-disaccharide synthase, found in Haemophilus influenzae (strain 86-028NP).